A 797-amino-acid polypeptide reads, in one-letter code: Cleavage factor two protein 2 (797 aa).

Disordered stretches follow at residues glutamate 519 to serine 557 and proline 677 to glutamate 703. Basic and acidic residues predominate over residues lysine 684 to glutamate 703.

Component of the cleavage and polyadenylation factor (CPF) complex, which is composed of cft1, cft2, ysh1, pta1, swd2, pfs2, dis2, yth1, ssu72, and fip1.

The protein resides in the nucleus. RNA-binding component of the cleavage and polyadenylation factor (CPF) complex, which plays a key role in polyadenylation-dependent pre-mRNA 3'-end formation and cooperates with cleavage factors including the CFIA complex and NAB4/CFIB. May be involved in poly(A)-site recognition. May be involved in the association of the CPF, CPFIA and RNA polymerase II complexes. This is Cleavage factor two protein 2 (cft2) from Schizosaccharomyces pombe (strain 972 / ATCC 24843) (Fission yeast).